A 215-amino-acid chain; its full sequence is Disulfide-bond oxidoreductase YfcG (215 aa).

In terms of domain architecture, GST N-terminal spans 1 to 87 (MIDLYFAPTP…YLAEKTGLFL (87 aa)). Residues Asn-11, Gln-38, Arg-40, Ile-52, 71–72 (ES), and Arg-132 contribute to the glutathione site. The GST C-terminal domain maps to 90-215 (ETRERAATLQ…AQLGDERSDS (126 aa)).

The protein belongs to the GST superfamily. Nu-class GSH transferase family. In terms of assembly, homodimer.

Exhibits a very robust glutathione (GSH)-dependent disulfide-bond reductase activity toward the model substrate, 2-hydroxyethyl disulfide; the actual physiological substrates are not known. Also has a low GSH-dependent hydroperoxidase activity toward cumene hydroperoxide, but does not reduce H(2)O(2), tert-butyl hydroperoxide, benzyl peroxide, or lauroyl peroxide. Exhibits little or no GSH transferase activity with most typical electrophilic substrates, and has no detectable transferase activity using glutathionylspermidine (GspSH) as the nucleophilic substrate. Is involved in defense against oxidative stress, probably via its peroxidase activity. The chain is Disulfide-bond oxidoreductase YfcG (yfcG) from Escherichia coli (strain K12).